The following is a 273-amino-acid chain: Vitamin B12-binding protein (273 aa).

Positions 1–18 (MMKTLSSLLLLFSVSLQA) are cleaved as a signal peptide. The Fe/B12 periplasmic-binding domain occupies 23–273 (RVISLAPHAT…EHFASIEQKR (251 aa)). Residues cysteine 183 and cysteine 263 are joined by a disulfide bond.

It belongs to the BtuF family. As to quaternary structure, the complex is composed of two ATP-binding proteins (BtuD), two transmembrane proteins (BtuC) and a solute-binding protein (BtuF).

It is found in the periplasm. Its function is as follows. Part of the ABC transporter complex BtuCDF involved in vitamin B12 import. Binds vitamin B12 and delivers it to the periplasmic surface of BtuC. This Vibrio vulnificus (strain YJ016) protein is Vitamin B12-binding protein.